Reading from the N-terminus, the 517-residue chain is Benzoate 4-monooxygenase bphA (517 aa).

Residues leucine 4 to leucine 24 traverse the membrane as a helical segment. N-linked (GlcNAc...) asparagine glycans are attached at residues asparagine 282 and asparagine 325. Residue cysteine 461 coordinates heme.

The protein belongs to the cytochrome P450 family. It depends on heme as a cofactor.

The protein localises to the membrane. The enzyme catalyses benzoate + reduced [NADPH--hemoprotein reductase] + O2 = 4-hydroxybenzoate + oxidized [NADPH--hemoprotein reductase] + H2O + H(+). In terms of biological role, cytochrome P450 monooxygenase; part of the benzoic acid degradation pathway also known as the protocatechuic acid pathway. Benzoic acid debradation begins with the conversion of benzoic acid into 4-hydroxybenzoic acid through hydroxylation by the benzoate-4-monooxygenase bphA, and its partner NADPH-cytochrome P450 reductase cprA which act as a mediator in electron donation from NADPH. 4-Hydroxybenzoic acid is then converted into 3,4-dihydroxybenzoic acid (also called protocatechuic acid) by the p-hydroxybenzoate-m-hydroxylase phhA. Protocatechuic acid is converted into 3-carboxy-cis,cis-muconic acid by the intradiol ring-cleavage dioxygenase prcA, which is further metabolized through the 3-oxoadipate pathway to finally enter the tricarboxylic acid cycle (TCA). Functionally, responsible for cytochrome P450 dependent benzoate hydroxylation in microsomes; requires cprA as the mediator in electron donation from NADPH. The sequence is that of Benzoate 4-monooxygenase bphA from Aspergillus niger.